The primary structure comprises 466 residues: Xanthine permease XanQ (466 aa).

Over 1-44 the chain is Cytoplasmic; sequence MSDINHAGSDLIFELEDRPPFHQALVGAITHLLAIFVPMVTPAL. Residues 45–65 form a helical membrane-spanning segment; it reads IVGAALQLSAETTAYLVSMAM. The Periplasmic portion of the chain corresponds to 66–74; the sequence is IASGIGTWL. Residues 75-95 form a helical membrane-spanning segment; the sequence is QVNRYGIVGSGLLSIQSVNFS. The Cytoplasmic portion of the chain corresponds to 96–99; that stretch reads FVTV. A helical membrane pass occupies residues 100–120; that stretch reads MIALGSSMKSDGFHEELIMSS. Topologically, residues 121 to 139 are periplasmic; the sequence is LLGVSFVGAFLVVGSSFIL. A helical membrane pass occupies residues 140–160; the sequence is PYLRRVITPTVSGIVVLMIGL. Residues 161–170 are Cytoplasmic-facing; it reads SLIKVGIIDF. A helical transmembrane segment spans residues 171 to 191; the sequence is GGGFAAKSSGTFGNYEHLGVG. Topologically, residues 192–199 are periplasmic; that stretch reads LLVLIVVI. The helical transmembrane segment at 200 to 220 threads the bilayer; that stretch reads GFNCCRSPLLRMGGIAIGLCV. The Cytoplasmic segment spans residues 221–229; it reads GYIASLCLG. A helical transmembrane segment spans residues 230-250; the sequence is MVDFSSMRNLPLITIPHPFKY. The Periplasmic portion of the chain corresponds to 251–277; the sequence is GFSFSFHQFLVVGTIYLLSVLEAVGDI. The helical transmembrane segment at 278–298 threads the bilayer; sequence TATAMVSRRPIQGEEYQSRLK. The Cytoplasmic portion of the chain corresponds to 299 to 317; it reads GGVLADGLVSVIASAVGSL. A helical transmembrane segment spans residues 318–338; the sequence is PLTTFAQNNGVIQMTGVASRY. The Periplasmic portion of the chain corresponds to 339-361; sequence VGRTIAVMLVILGLFPMIGGFFT. Residues 362–382 form a helical membrane-spanning segment; the sequence is TIPSAVLGGAMTLMFSMIAIA. Position 383 (G383) is a topological domain, cytoplasmic. Residues 384-403 form a helical membrane-spanning segment; sequence IRIIITNGLKRRETLIVATS. The Periplasmic portion of the chain corresponds to 404 to 444; that stretch reads LGLGLGVSYDPEIFKILPASIYVLVENPICAGGLTAILLNI. A helical membrane pass occupies residues 445–465; sequence ILPGGYRQENVLPGITSAEEM. Position 466 (D466) is a topological domain, cytoplasmic.

The protein belongs to the nucleobase:cation symporter-2 (NCS2) (TC 2.A.40) family.

Its subcellular location is the cell inner membrane. It catalyses the reaction xanthine(in) + H(+)(in) = xanthine(out) + H(+)(out). Its function is as follows. Specific, proton motive force-dependent high-affinity transporter for xanthine. In Escherichia coli O157:H7, this protein is Xanthine permease XanQ (xanQ).